The following is a 430-amino-acid chain: Enolase (430 aa).

Glutamine 165 lines the (2R)-2-phosphoglycerate pocket. Glutamate 207 acts as the Proton donor in catalysis. Mg(2+) is bound by residues aspartate 244, glutamate 287, and aspartate 314. Lysine 339, arginine 368, serine 369, and lysine 390 together coordinate (2R)-2-phosphoglycerate. Lysine 339 acts as the Proton acceptor in catalysis.

Belongs to the enolase family. As to quaternary structure, component of the RNA degradosome, a multiprotein complex involved in RNA processing and mRNA degradation. The cofactor is Mg(2+).

The protein resides in the cytoplasm. It localises to the secreted. Its subcellular location is the cell surface. It catalyses the reaction (2R)-2-phosphoglycerate = phosphoenolpyruvate + H2O. Its pathway is carbohydrate degradation; glycolysis; pyruvate from D-glyceraldehyde 3-phosphate: step 4/5. Functionally, catalyzes the reversible conversion of 2-phosphoglycerate (2-PG) into phosphoenolpyruvate (PEP). It is essential for the degradation of carbohydrates via glycolysis. In Stenotrophomonas maltophilia (strain K279a), this protein is Enolase.